The primary structure comprises 274 residues: Putative phosphoenolpyruvate synthase regulatory protein (274 aa).

155–162 (GVSRSGKT) is a binding site for ADP.

It belongs to the pyruvate, phosphate/water dikinase regulatory protein family. PSRP subfamily.

It catalyses the reaction [pyruvate, water dikinase] + ADP = [pyruvate, water dikinase]-phosphate + AMP + H(+). It carries out the reaction [pyruvate, water dikinase]-phosphate + phosphate + H(+) = [pyruvate, water dikinase] + diphosphate. Its function is as follows. Bifunctional serine/threonine kinase and phosphorylase involved in the regulation of the phosphoenolpyruvate synthase (PEPS) by catalyzing its phosphorylation/dephosphorylation. The protein is Putative phosphoenolpyruvate synthase regulatory protein of Laribacter hongkongensis (strain HLHK9).